The following is a 1517-amino-acid chain: MNQFPNQPGNFGQNYYKPVQGSIPANSEATNFQQNNSRENKSECELRQNSIAASMSAYPNGMYAGAENHNVENHENYTMVGHDHMEEVYGDDLVNEPRIAYSSDIVATFDGKDFGSNLHVDDTLDQQWAHFAGKQQHPLEPREIPFPVTDPLNSKIEMKQFTNIAAVLRYRGVHSAKKTAFIILDNKGKEFTSITWEKLASRAEKVAQVIRDKSGLFRSDRVVLMYRDCEAIDFVVSLFGCFIAGVVAVPINRFDDYNELSSILTTTSARLALTTDANLKAFQRDLNAKKLHWPKNVEWWKTNEFGGFHLKKKAEMPPLQVPDLAYIEFSRSPIGELHGVVISHRTILHQMNCLAAIHATAPAYESDKLDYLSIDREYTEGLSKSGLFLTYLDLRQAIGLILGVLHTVFSGYTTVWCPQNAVFVPGLWANLATRYRASFMLTDYAGLKTIAYNYQNDPKATLGFSKKHSVDLSSLRMCMVDCLNVDCEFQEIVSDRWLKPLGNQNPRATFVPLLCLPEHGGMVISMKDWIGGEEFMSPKGFKSPRTPENEISEVLLEKEALKLNEVVVLAEDDKARRQSKHPNTIRVGAFWYPFVDATLAIVDPETQVLCLPNIVGEIWVDSPSLSGGFFALPKQTEAIFHARTSFISSDTFQPIPSNQEFLRTGLLGFIRKGKVYVLGLYEDRLQQKVEWVDNGKQDTIFFHHYTSHLVNTIMRKVSKVFDCSAFDIFVNSEHLPVVLLESPAANIPTEANGNQVVINYGLLDLITTECVECLLEDHQVRVYCVLICAPFTLPRVTKNGRQEIGNMMCRRAFEHGTLPFLYVKFAVERAVLNLPVGEDAIDGIWSSYASGIRQNLLSDQELQYSGFIDRSLRYDAKTSVDISSCHTMLQLLQLRVAKNAEDIAYITIDGRGREGKNITWRKFDQRVATIIRYLQKKKYIKPGRVVVLMYTHSEDFVYALYACFYLGLIPIPVPPLDHMRLSEDVPAFLFLIKHYYVSAVLVNSEADTALRAKTTSQHLKQSAMAAKVVLPSFIVTSKISKQTKSIKELNVKLDPICLDPAFPALVWAFWSPDHRLTLTAYNHQTLLSICQIHKETCQMTHKRPLLGHVRSMSGIGFFHTCLMGVFLGTTTYLLSPVDFANNPLLLFQIISKYKIKDTYATFQTLNYIQNQQPTKWPNLSCLENLMIPHDGRISAFYIASLQKYFVKHGLSPYAFSTVYSNCLNPFISTRSYMGAIPTPQLLDLRALRHGLIQPCESADKPYALPLLDSGMVPVSTQLAIVNPDTRELCRVGEYGEIWMRSSANAISFFQSTDPVDMMRFNATNSDGFLGNGYVRTGDLGFLQITSHSMGPNAPVVDMQLLYVLGPIGETFEVNGLSHFPSDIEDTIERSHPRIARGGTAVFQSAGRVVVVIEALGQDFLAAIVPVVINSILDEHQIIADVVAFTSRGNFPRSRLREKQRGKILASWVTGRLRTTQVFYIRGSGEGEFQSSYVPDYNPSLRSTPSVSSRSTLPQRVF.

Residues 1-13 (MNQFPNQPGNFGQ) are compositionally biased toward polar residues. The segment at 1–26 (MNQFPNQPGNFGQNYYKPVQGSIPAN) is disordered. N-linked (GlcNAc...) asparagine glycosylation is found at Asn35, Asn40, and Asn76. The next 5 helical transmembrane spans lie at 231-251 (AIDF…AVPI), 397-417 (AIGL…TVWC), 510-530 (FVPL…KDWI), 612-632 (PNIV…FFAL), and 720-740 (VFDC…VVLL). Asn917 carries N-linked (GlcNAc...) asparagine glycosylation. Helical transmembrane passes span 956–976 (FVYA…VPPL), 985–1005 (VPAF…VNSE), 1051–1071 (VKLD…AFWS), and 1114–1134 (GIGF…TYLL). N-linked (GlcNAc...) asparagine glycosylation occurs at Asn1178. Residues 1261–1281 (PYALPLLDSGMVPVSTQLAIV) traverse the membrane as a helical segment. An N-linked (GlcNAc...) asparagine glycan is attached at Asn1321. 2 helical membrane passes run 1353-1373 (APVV…TFEV) and 1408-1428 (VVVV…PVVI).

It to S.pombe SpAC22F3.04.

It is found in the membrane. This is an uncharacterized protein from Schizosaccharomyces pombe (strain 972 / ATCC 24843) (Fission yeast).